Here is a 338-residue protein sequence, read N- to C-terminus: RNA 3'-terminal phosphate cyclase (338 aa).

ATP contacts are provided by residues Q103 and 283-287 (YLADQ). H308 (tele-AMP-histidine intermediate) is an active-site residue.

Belongs to the RNA 3'-terminal cyclase family. Type 1 subfamily.

The protein localises to the cytoplasm. The enzyme catalyses a 3'-end 3'-phospho-ribonucleotide-RNA + ATP = a 3'-end 2',3'-cyclophospho-ribonucleotide-RNA + AMP + diphosphate. Functionally, catalyzes the conversion of 3'-phosphate to a 2',3'-cyclic phosphodiester at the end of RNA. The mechanism of action of the enzyme occurs in 3 steps: (A) adenylation of the enzyme by ATP; (B) transfer of adenylate to an RNA-N3'P to produce RNA-N3'PP5'A; (C) and attack of the adjacent 2'-hydroxyl on the 3'-phosphorus in the diester linkage to produce the cyclic end product. The biological role of this enzyme is unknown but it is likely to function in some aspects of cellular RNA processing. This Escherichia coli O6:H1 (strain CFT073 / ATCC 700928 / UPEC) protein is RNA 3'-terminal phosphate cyclase.